The sequence spans 306 residues: Ribosomal protein L11 methyltransferase (306 aa).

The S-adenosyl-L-methionine site is built by T154, G179, D201, and N242.

This sequence belongs to the methyltransferase superfamily. PrmA family.

Its subcellular location is the cytoplasm. It carries out the reaction L-lysyl-[protein] + 3 S-adenosyl-L-methionine = N(6),N(6),N(6)-trimethyl-L-lysyl-[protein] + 3 S-adenosyl-L-homocysteine + 3 H(+). Its function is as follows. Methylates ribosomal protein L11. In Stenotrophomonas maltophilia (strain R551-3), this protein is Ribosomal protein L11 methyltransferase.